The following is a 159-amino-acid chain: Ribose-5-phosphate isomerase B (159 aa).

Residues 8-9 (DH) and 67-71 (GSGNG) contribute to the D-ribulose 5-phosphate site. The active-site Proton acceptor is Glu72. His99 (proton donor) is an active-site residue. Residues Asn100, Arg110, Arg134, and Arg138 each contribute to the D-ribulose 5-phosphate site.

The protein belongs to the LacAB/RpiB family. In terms of assembly, homodimer.

The enzyme catalyses aldehydo-D-ribose 5-phosphate = D-ribulose 5-phosphate. It participates in carbohydrate degradation; pentose phosphate pathway; D-ribose 5-phosphate from D-ribulose 5-phosphate (non-oxidative stage): step 1/1. In terms of biological role, catalyzes the interconversion of ribulose-5-P and ribose-5-P. The protein is Ribose-5-phosphate isomerase B of Mycolicibacterium paratuberculosis (strain ATCC BAA-968 / K-10) (Mycobacterium paratuberculosis).